A 281-amino-acid polypeptide reads, in one-letter code: Radiation response metalloprotease IrrE (281 aa).

Residue histidine 82 participates in Zn(2+) binding. The active site involves glutamate 83. 2 residues coordinate Zn(2+): histidine 86 and glutamate 113. The tract at residues 262-281 (LPAGRSEPDADKPEAPGDQS) is disordered. Over residues 267–281 (SEPDADKPEAPGDQS) the composition is skewed to basic and acidic residues.

As to quaternary structure, interacts with DdrOC.

Protease activity is inhibited by EDTA. Its function is as follows. Plays a central regulatory role in DNA repair and protection pathways in response to radiation stress. Acts as a site-specific metalloprotease that cleaves and inactivates the repressor proteins DdrOC and DdrOP3, resulting in induced expression of genes required for DNA repair and cell survival after exposure to radiation. The polypeptide is Radiation response metalloprotease IrrE (Deinococcus deserti (strain DSM 17065 / CIP 109153 / LMG 22923 / VCD115)).